A 174-amino-acid chain; its full sequence is Repair DNA polymerase X (174 aa).

The segment at R42–D51 is involved in ssDNA binding. 2 residues coordinate Mg(2+): D49 and D51. Cysteines 81 and 86 form a disulfide. D100 serves as a coordination point for Mg(2+).

This sequence belongs to the DNA polymerase type-X family. Requires Mg(2+) as cofactor.

It is found in the virion. The catalysed reaction is DNA(n) + a 2'-deoxyribonucleoside 5'-triphosphate = DNA(n+1) + diphosphate. Functionally, error-prone polymerase lacking a proofreading 3'-5' exonuclease which catalyzes the gap-filling reaction during the DNA repair process. Specifically binds intermediates in the single-nucleotide base-excision repair process. Also catalyzes DNA polymerization with low nucleotide-insertion fidelity. Probably acts as a strategic DNA mutase, which gives rise to a rapid emergence of variants. Generates mismatched G-G pairs, in that case, the polymerase first binds the deoxynucleotide followed by mismatch formation. Together with the viral DNA ligase, fills the single nucleotide gaps generated by the AP endonuclease. Binds DNA with high affinity via the helix alphaE. In Ornithodoros (relapsing fever ticks), this protein is Repair DNA polymerase X.